Here is a 102-residue protein sequence, read N- to C-terminus: uncharacterized protein (102 aa).

Over residues 1–13 (PSSSQALSVPSLS) the composition is skewed to low complexity. Residues 1–24 (PSSSQALSVPSLSSEKKTASPTCV) form a disordered region.

This is an uncharacterized protein from Human cytomegalovirus (strain AD169) (HHV-5).